The sequence spans 293 residues: Bifunctional protein FolD (293 aa).

NADP(+) is bound by residues 164–166 (GRS), Ser193, and Thr234.

The protein belongs to the tetrahydrofolate dehydrogenase/cyclohydrolase family. Homodimer.

The catalysed reaction is (6R)-5,10-methylene-5,6,7,8-tetrahydrofolate + NADP(+) = (6R)-5,10-methenyltetrahydrofolate + NADPH. It catalyses the reaction (6R)-5,10-methenyltetrahydrofolate + H2O = (6R)-10-formyltetrahydrofolate + H(+). It functions in the pathway one-carbon metabolism; tetrahydrofolate interconversion. Its function is as follows. Catalyzes the oxidation of 5,10-methylenetetrahydrofolate to 5,10-methenyltetrahydrofolate and then the hydrolysis of 5,10-methenyltetrahydrofolate to 10-formyltetrahydrofolate. The chain is Bifunctional protein FolD from Azobacteroides pseudotrichonymphae genomovar. CFP2.